Consider the following 213-residue polypeptide: FMN-dependent NADH:quinone oxidoreductase 3 (213 aa).

FMN-binding positions include Ser-10, 16–18 (SVS), and 96–99 (MYNF).

The protein belongs to the azoreductase type 1 family. In terms of assembly, homodimer. It depends on FMN as a cofactor.

It catalyses the reaction 2 a quinone + NADH + H(+) = 2 a 1,4-benzosemiquinone + NAD(+). The enzyme catalyses N,N-dimethyl-1,4-phenylenediamine + anthranilate + 2 NAD(+) = 2-(4-dimethylaminophenyl)diazenylbenzoate + 2 NADH + 2 H(+). Functionally, quinone reductase that provides resistance to thiol-specific stress caused by electrophilic quinones. Shows a preference for naphthoquinones such as plumbagin. In terms of biological role, also exhibits azoreductase activity. Catalyzes the reductive cleavage of the azo bond in aromatic azo compounds to the corresponding amines. Preferred substrates are methyl red, amaranth and p-aminoazobenzene sulfonamide (PAABSA). The polypeptide is FMN-dependent NADH:quinone oxidoreductase 3 (Pseudomonas aeruginosa (strain ATCC 15692 / DSM 22644 / CIP 104116 / JCM 14847 / LMG 12228 / 1C / PRS 101 / PAO1)).